Here is a 78-residue protein sequence, read N- to C-terminus: Biotin synthase auxiliary protein (78 aa).

Belongs to the BsaP family. The cofactor is iron-sulfur cluster.

Required for the activity of the biotin synthase BioB. The polypeptide is Biotin synthase auxiliary protein (Mycolicibacterium smegmatis (strain ATCC 700084 / mc(2)155) (Mycobacterium smegmatis)).